Reading from the N-terminus, the 543-residue chain is MAELTIDPASIRKALDDFVSSYKPSDTPTQEVGYVATAGDGIAHVTGLPGCMANELLTFEDGTLGLAFNLDAREIGVVILGDFAGIEEGQEVRRTGEVLSVPVGDGYLGRVVDPLGKPIDGLGEIQNIEGRRILEAQAPDVMHRHPVDEPLSTGLKAIDAMTPIGRGQRQLIIGDRQTGKTAIAIDTIINQKANWESGDPKKQVRCIYVAIGQKGSTIASVKQSLEDAGAMEYTTIVASPAADSAGFKYIAPYTGSAIGQHWMYNGKHVLIVFDDLSKQAEAYRSISLLLRRPPGREAYPGDVFYLHSRLLERCAKVSDDLGGGSMTGLPIVETKANDVSAYIPTNVISITDGQIFLQSDLFNANQRPAVDVGISVSRVGGAAQTKALKKVSGTLKISLAQYRSLESFAMFASDLDAASKAQLTRGAHLTELLKQPQFHPYSPEQEVVSVWTGTHGKLDDLDLKDVLPFEQGLLDYIDHNTDILKTIRETEEFTADTEAALDKAVDEFRSTFVSGSGKPLEEKKVESVKAAPVDQEKIVAGEK.

Position 174–181 (174–181 (GDRQTGKT)) interacts with ATP.

The protein belongs to the ATPase alpha/beta chains family. In terms of assembly, F-type ATPases have 2 components, CF(1) - the catalytic core - and CF(0) - the membrane proton channel. CF(1) has five subunits: alpha(3), beta(3), gamma(1), delta(1), epsilon(1). CF(0) has three main subunits: a(1), b(2) and c(9-12). The alpha and beta chains form an alternating ring which encloses part of the gamma chain. CF(1) is attached to CF(0) by a central stalk formed by the gamma and epsilon chains, while a peripheral stalk is formed by the delta and b chains.

It is found in the cell membrane. It carries out the reaction ATP + H2O + 4 H(+)(in) = ADP + phosphate + 5 H(+)(out). In terms of biological role, produces ATP from ADP in the presence of a proton gradient across the membrane. The alpha chain is a regulatory subunit. The protein is ATP synthase subunit alpha of Bifidobacterium longum subsp. infantis (strain ATCC 15697 / DSM 20088 / JCM 1222 / NCTC 11817 / S12).